The chain runs to 364 residues: Aminomethyltransferase (364 aa).

The protein belongs to the GcvT family. In terms of assembly, the glycine cleavage system is composed of four proteins: P, T, L and H.

The catalysed reaction is N(6)-[(R)-S(8)-aminomethyldihydrolipoyl]-L-lysyl-[protein] + (6S)-5,6,7,8-tetrahydrofolate = N(6)-[(R)-dihydrolipoyl]-L-lysyl-[protein] + (6R)-5,10-methylene-5,6,7,8-tetrahydrofolate + NH4(+). Its function is as follows. The glycine cleavage system catalyzes the degradation of glycine. The chain is Aminomethyltransferase from Salmonella dublin (strain CT_02021853).